We begin with the raw amino-acid sequence, 362 residues long: 5-amino-6-(D-ribitylamino)uracil--L-tyrosine 4-hydroxyphenyl transferase (362 aa).

A Radical SAM core domain is found at 48 to 294 (ITYVVNRNIN…GDTIKNIQVS (247 aa)). Positions 62, 66, and 69 each coordinate [4Fe-4S] cluster.

Belongs to the radical SAM superfamily. CofH family. Consists of two subunits, CofG and CofH. It depends on [4Fe-4S] cluster as a cofactor.

The enzyme catalyses 5-amino-6-(D-ribitylamino)uracil + L-tyrosine + S-adenosyl-L-methionine = 5-amino-5-(4-hydroxybenzyl)-6-(D-ribitylimino)-5,6-dihydrouracil + 2-iminoacetate + 5'-deoxyadenosine + L-methionine + H(+). It functions in the pathway cofactor biosynthesis; coenzyme F0 biosynthesis. In terms of biological role, catalyzes the radical-mediated synthesis of 5-amino-5-(4-hydroxybenzyl)-6-(D-ribitylimino)-5,6-dihydrouracil from 5-amino-6-(D-ribitylamino)uracil and L-tyrosine. This chain is 5-amino-6-(D-ribitylamino)uracil--L-tyrosine 4-hydroxyphenyl transferase, found in Methanococcus aeolicus (strain ATCC BAA-1280 / DSM 17508 / OCM 812 / Nankai-3).